Consider the following 152-residue polypeptide: Aspartate 1-decarboxylase (152 aa).

S24 (schiff-base intermediate with substrate; via pyruvic acid) is an active-site residue. S24 carries the post-translational modification Pyruvic acid (Ser). T56 is a substrate binding site. The active-site Proton donor is Y57. Residue 72–74 (GAA) participates in substrate binding.

The protein belongs to the PanD family. As to quaternary structure, heterooctamer of four alpha and four beta subunits. It depends on pyruvate as a cofactor. Is synthesized initially as an inactive proenzyme, which is activated by self-cleavage at a specific serine bond to produce a beta-subunit with a hydroxyl group at its C-terminus and an alpha-subunit with a pyruvoyl group at its N-terminus.

It localises to the cytoplasm. The enzyme catalyses L-aspartate + H(+) = beta-alanine + CO2. It functions in the pathway cofactor biosynthesis; (R)-pantothenate biosynthesis; beta-alanine from L-aspartate: step 1/1. Catalyzes the pyruvoyl-dependent decarboxylation of aspartate to produce beta-alanine. This Methylobacterium nodulans (strain LMG 21967 / CNCM I-2342 / ORS 2060) protein is Aspartate 1-decarboxylase.